A 268-amino-acid chain; its full sequence is MATMIETPYEDLLRRVLEEGAPKGDRTGTGTLSLFGAQLRYNLAESFPLLTTKKVYFHGVIGELLWFLRGDSNVKWLQENKVRIWNEWADEDGELGPVYGVQWRSWPTPDGQHIDQIQVALDTLKNNPDSRRNLVSAWNVSELDKMALMPCHLLFQLYVADGKLSMQVYQRSADMFLGVPFNLASYAALTHMFAQQAGLEVGELIWTGGDCHIYNDHIEQVKEQLSRQPREYPQLKLHKAESLFDYDFDDFEVIGYDPHPTIKAQVSV.

DUMP is bound by residues R26 and R131 to R132. The active-site Nucleophile is C151. DUMP-binding positions include R171 to D174, N182, and H212 to Y214. D174 contacts (6R)-5,10-methylene-5,6,7,8-tetrahydrofolate. A (6R)-5,10-methylene-5,6,7,8-tetrahydrofolate-binding site is contributed by S267.

It belongs to the thymidylate synthase family. Bacterial-type ThyA subfamily. In terms of assembly, homodimer.

It is found in the cytoplasm. It catalyses the reaction dUMP + (6R)-5,10-methylene-5,6,7,8-tetrahydrofolate = 7,8-dihydrofolate + dTMP. The protein operates within pyrimidine metabolism; dTTP biosynthesis. Functionally, catalyzes the reductive methylation of 2'-deoxyuridine-5'-monophosphate (dUMP) to 2'-deoxythymidine-5'-monophosphate (dTMP) while utilizing 5,10-methylenetetrahydrofolate (mTHF) as the methyl donor and reductant in the reaction, yielding dihydrofolate (DHF) as a by-product. This enzymatic reaction provides an intracellular de novo source of dTMP, an essential precursor for DNA biosynthesis. The polypeptide is Thymidylate synthase (Corynebacterium aurimucosum (strain ATCC 700975 / DSM 44827 / CIP 107346 / CN-1) (Corynebacterium nigricans)).